A 124-amino-acid chain; its full sequence is ATP synthase epsilon chain (124 aa).

The interval 97-124 (ARVREASSEEEKSRAESELRAVKRSKEK) is disordered.

The protein belongs to the ATPase epsilon chain family. As to quaternary structure, F-type ATPases have 2 components, CF(1) - the catalytic core - and CF(0) - the membrane proton channel. CF(1) has five subunits: alpha(3), beta(3), gamma(1), delta(1), epsilon(1). CF(0) has three main subunits: a, b and c.

It is found in the cell membrane. In terms of biological role, produces ATP from ADP in the presence of a proton gradient across the membrane. The protein is ATP synthase epsilon chain of Corynebacterium urealyticum (strain ATCC 43042 / DSM 7109).